Here is a 395-residue protein sequence, read N- to C-terminus: uncharacterized protein (395 aa).

Transmembrane regions (helical) follow at residues Leu-12–Leu-34, Leu-44–Leu-66, Tyr-75–Asn-94, Val-99–Phe-121, Phe-134–Val-156, Ile-160–Val-182, Leu-208–Ser-230, Val-245–Val-264, Ala-271–Phe-293, Leu-298–Tyr-320, Leu-341–Leu-360, and Ser-364–Leu-381.

This sequence belongs to the major facilitator superfamily.

Its subcellular location is the cell inner membrane. Its function is as follows. A transporter able to export peptides. When overexpressed, allows cells deleted for multiple peptidases (pepA, pepB, pepD and pepN) to grow in the presence of dipeptides Ala-Gln or Gly-Tyr which otherwise inhibit growth. Cells overexpressing this protein have decreased intracellular levels of Ala-Gln dipeptide, and in a system that produces the Ala-Gln dipeptide overproduction of this protein increases export of the dipeptide. This is an uncharacterized protein from Escherichia coli (strain K12).